Reading from the N-terminus, the 506-residue chain is Chorion-specific transcription factor GCMb (506 aa).

Residues 19–174 (LSWDINDPQM…KSETEARRSA (156 aa)) constitute a DNA-binding region (GCM). 8 residues coordinate Zn(2+): C81, C87, C91, C118, C121, C130, H157, and H159. Residues 155-172 (GVHDHPRPESKSETEARR) show a composition bias toward basic and acidic residues. The interval 155–213 (GVHDHPRPESKSETEARRSAIKRQMASFYQPQKKRIRESEAEENQDSSGHFSNIPPLEN) is disordered. Residues 379–395 (LQTVITTTTKVSYQAYQ) form a C-terminal conserved inhibitory domain (CCID) region.

Its subcellular location is the nucleus. Its function is as follows. Transcription factor that binds specific sequences on gene promoters and activate their transcription. Through the regulation of gene transcription, may play a role in parathyroid gland development. This chain is Chorion-specific transcription factor GCMb, found in Homo sapiens (Human).